The sequence spans 476 residues: Cytosolic iron-sulfur assembly component 3 (476 aa).

At A2 the chain carries N-acetylalanine. Positions 24, 71, 74, 77, 190, 246, 395, and 399 each coordinate [4Fe-4S] cluster.

It belongs to the NARF family. As to quaternary structure, external component of the CIA complex. In the CIA complex, interacts directly with CIAO1 and MMS19.

In terms of biological role, component of the cytosolic iron-sulfur protein assembly (CIA) complex, a multiprotein complex that mediates the incorporation of iron-sulfur cluster into extramitochondrial Fe/S proteins. Seems to negatively regulate the level of HIF1A expression, although this effect could be indirect. The sequence is that of Cytosolic iron-sulfur assembly component 3 from Rattus norvegicus (Rat).